The chain runs to 126 residues: Probable flagellum biosynthesis repressor protein FlbT (126 aa).

It belongs to the FlbT family.

Functionally, has a post-transcriptional repressor function in flagellum biogenesis. Associates with the 5'-UTR of fljK mRNA and promotes its degradation. This Rhodopseudomonas palustris (strain ATCC BAA-98 / CGA009) protein is Probable flagellum biosynthesis repressor protein FlbT.